A 241-amino-acid chain; its full sequence is RAD9, HUS1, RAD1-interacting nuclear orphan protein 1 (241 aa).

The span at Met-1–Ala-10 shows a compositional bias: basic residues. A disordered region spans residues Met-1 to Lys-27. An RAD1-binding motif motif is present at residues Ser-56 to Phe-62. Disordered stretches follow at residues Ser-68–Pro-134 and Ile-157–Asp-204. Basic residues predominate over residues Gly-72–Arg-87. Residues Glu-100–Thr-110 are compositionally biased toward polar residues. A D-box motif is present at residues Gly-129–Leu-136. A KEN box motif is present at residues Leu-177–Ser-181. The segment covering Ser-181 to Lys-193 has biased composition (polar residues).

Interacts (when phosphorylated by PLK1) with POLQ; promoting POLQ recruitment to DNA damage sites. Interacts with RAD1; interaction is direct and promotes association with the 9-1-1 (RAD9-RAD1-HUS1) complex. Interacts with RAD18. Interacts with TOPBP1. Interacts with UBE2N. In terms of processing, phosphorylated by PLK1, promoting interaction with polymerase theta (POLQ). Ubiquitinated and degraded by the APC/C complex upon mitotic exit.

The protein localises to the nucleus. The protein resides in the chromosome. Involved in microhomology-mediated end-joining (MMEJ) DNA repair by promoting recruitment of polymerase theta (POLQ) to DNA damage sites during mitosis. MMEJ is an alternative non-homologous end-joining (NHEJ) machinery that takes place during mitosis to repair double-strand breaks in DNA that originate in S-phase. Accumulates in M-phase; following phosphorylation by PLK1, interacts with POLQ, enabling its recruitment to double-strand breaks for subsequent repair. Also involved in the DNA damage response (DDR) signaling in response to genotoxic stresses such as ionizing radiation (IR) during the S phase. Recruited to sites of DNA damage through interaction with the 9-1-1 cell-cycle checkpoint response complex and TOPBP1 in a ATR-dependent manner. Required for the progression of the G1 to S phase transition. Plays a role in the stimulation of CHEK1 phosphorylation. In Bos taurus (Bovine), this protein is RAD9, HUS1, RAD1-interacting nuclear orphan protein 1 (RHNO1).